The following is a 157-amino-acid chain: Protein Smg (157 aa).

This sequence belongs to the Smg family.

This is Protein Smg from Buchnera aphidicola subsp. Acyrthosiphon pisum (strain Tuc7).